The primary structure comprises 208 residues: 3-demethoxyubiquinol 3-hydroxylase (208 aa).

Positions 57, 87, 90, 139, 171, and 174 each coordinate Fe cation.

This sequence belongs to the COQ7 family. The cofactor is Fe cation.

It is found in the cell membrane. It carries out the reaction a 5-methoxy-2-methyl-3-(all-trans-polyprenyl)benzene-1,4-diol + AH2 + O2 = a 3-demethylubiquinol + A + H2O. Its pathway is cofactor biosynthesis; ubiquinone biosynthesis. Functionally, catalyzes the hydroxylation of 2-nonaprenyl-3-methyl-6-methoxy-1,4-benzoquinol during ubiquinone biosynthesis. The chain is 3-demethoxyubiquinol 3-hydroxylase from Burkholderia vietnamiensis (strain G4 / LMG 22486) (Burkholderia cepacia (strain R1808)).